The primary structure comprises 576 residues: Peroxisomal targeting signal receptor (576 aa).

Cys-10 is covalently cross-linked (Glycyl cysteine thioester (Cys-Gly) (interchain with G-Cter in ubiquitin)). The segment at 11–33 (AAGSNPLAQFTKHTQHDTSLQQS) is amphipathic helix 1 (AH1). Lys-22 participates in a covalent cross-link: Glycyl lysine isopeptide (Lys-Gly) (interchain with G-Cter in ubiquitin). The amphipathic helix 2 (AH2) stretch occupies residues 58-75 (RQQMDQFMQQQNNPAFNF). Short sequence motifs (wxxxF/Y motif) lie at residues 100–104 (WNQEF) and 128–132 (WAQDF). A disordered region spans residues 176–195 (AQMQQQNPAQAQTSEQSQTQ). The WxxxF/Y motif 3 motif lies at 196–200 (WEDQF). Residues 224 to 240 (FEQVWDDIQVSYADVEL) are amphipathic helix 4 (AH4). The short motif at 249–253 (WEKDF) is the WxxxF/Y motif 4 element. TPR repeat units lie at residues 278-311 (PDAYEIGMRLMESGAKLSEAGLAFEAAVQQDPKH), 312-345 (VDAWLKLGEVQTQNEKESDGIAALEKCLELDPTN), 346-383 (LAALMTLAISYINDGYDNAAYATLERWIETKYPDIASR), 384-421 (ARSSNPDLDGGDRIEQNKRVTELFMKAAQLSPDVASMD), 422-455 (ADVQTGLGVLFYSMEEFDKTIDCFKAAIEVEPDK), 456-489 (ALNWNRLGAALANYNKPEEAVEAYSRALQLNPNF), and 490-523 (VRARYNLGVSFINMGRYKEAVEHLLTGISLHEVE).

Belongs to the peroxisomal targeting signal receptor family. In terms of assembly, interacts (via WxxxF/Y and LVxEF motifs) with PEX14; promoting translocation through the PEX13-PEX14 docking complex. Interacts with PEX8. In terms of processing, a disulfide bond is created between Cys-10 and Cys-338 or Cys-444. Monoubiquitinated at Cys-10 by PEX2 during PEX5 passage through the retrotranslocation channel: monoubiquitination acts as a signal for PEX5 extraction and is required for proper export from peroxisomes and recycling. When PEX5 recycling is compromised, polyubiquitinated at Lys-22 by PEX10 during its passage through the retrotranslocation channel, leading to its degradation.

It is found in the peroxisome membrane. Its subcellular location is the cytoplasm. The protein resides in the cytosol. It localises to the peroxisome matrix. In terms of biological role, receptor that mediates peroxisomal import of proteins containing a C-terminal PTS1-type tripeptide peroxisomal targeting signal (SKL-type). Binds to cargo proteins containing a PTS1 peroxisomal targeting signal in the cytosol, and translocates them into the peroxisome matrix by passing through the peroxisomal docking complex along with cargo proteins. PEX5 receptor is then retrotranslocated into the cytosol, leading to release of bound cargo in the peroxisome matrix, and reset for a subsequent peroxisome import cycle. Required for PEX7 ubiquitination. In Komagataella phaffii (strain GS115 / ATCC 20864) (Yeast), this protein is Peroxisomal targeting signal receptor.